An 874-amino-acid polypeptide reads, in one-letter code: Alanine--tRNA ligase (874 aa).

The Zn(2+) site is built by His562, His566, Cys664, and His668.

Belongs to the class-II aminoacyl-tRNA synthetase family. Requires Zn(2+) as cofactor.

It is found in the cytoplasm. It catalyses the reaction tRNA(Ala) + L-alanine + ATP = L-alanyl-tRNA(Ala) + AMP + diphosphate. Catalyzes the attachment of alanine to tRNA(Ala) in a two-step reaction: alanine is first activated by ATP to form Ala-AMP and then transferred to the acceptor end of tRNA(Ala). Also edits incorrectly charged Ser-tRNA(Ala) and Gly-tRNA(Ala) via its editing domain. The polypeptide is Alanine--tRNA ligase (Shewanella oneidensis (strain ATCC 700550 / JCM 31522 / CIP 106686 / LMG 19005 / NCIMB 14063 / MR-1)).